A 215-amino-acid polypeptide reads, in one-letter code: Ribose-5-phosphate isomerase A (215 aa).

Substrate-binding positions include 26-29 (TGST), 79-82 (DGAD), and 92-95 (KGGG). The Proton acceptor role is filled by Glu-101. Residue Lys-119 participates in substrate binding.

The protein belongs to the ribose 5-phosphate isomerase family. In terms of assembly, homodimer.

It carries out the reaction aldehydo-D-ribose 5-phosphate = D-ribulose 5-phosphate. The protein operates within carbohydrate degradation; pentose phosphate pathway; D-ribose 5-phosphate from D-ribulose 5-phosphate (non-oxidative stage): step 1/1. Its function is as follows. Catalyzes the reversible conversion of ribose-5-phosphate to ribulose 5-phosphate. This chain is Ribose-5-phosphate isomerase A, found in Xylella fastidiosa (strain Temecula1 / ATCC 700964).